A 208-amino-acid chain; its full sequence is MAKNYYDITLALAGICQSARLVQQLAHDGQCDNVALRTSLSSILQTDPPNTLAVFGDHERVLKPGLETLLNVLNANRQGPGAELTRYCLSLMLLERKLFGHPQALRTLSERIGELDRQLAHFDLESDTIVSALAAIYVDVISPLGPRIQVTGSPAVLQNALVQARVRAALLAGIRAGILWQQVGGSRLQLMFSRNRLFQMAQNLLTHS.

Belongs to the HflD family.

The protein resides in the cytoplasm. It is found in the cell inner membrane. The protein is High frequency lysogenization protein HflD homolog of Edwardsiella ictaluri (strain 93-146).